The chain runs to 636 residues: Probable cyclin-dependent serine/threonine-protein kinase DDB_G0278487 (636 aa).

The tract at residues 1-41 (MPSQSNNVITSSTASSSMSSSSNSSDASSTSSSNTNNAHSS) is disordered. In terms of domain architecture, Protein kinase spans 64–343 (YEIISKIGEG…AEQALQSPFF (280 aa)). Residues 70–78 (IGEGISGSV) and Lys93 contribute to the ATP site. The Proton acceptor role is filled by Asp184. Disordered regions lie at residues 378–408 (EQQK…QKKQ), 473–506 (KRQQ…NNSY), 527–555 (SETE…DEED), and 579–636 (NNQQ…LTIH). Residues 473-485 (KRQQQEHEQRLQR) are compositionally biased toward basic and acidic residues. Over residues 486–499 (EQQQQLNQLQQQKE) the composition is skewed to low complexity. Residues 529–555 (TESEYESDEEDFYTEEEVEDYSSDEED) are compositionally biased toward acidic residues. Low complexity-rich tracts occupy residues 579-594 (NNQQ…QQQQ) and 617-628 (NNNNGNNNNNNN).

Belongs to the protein kinase superfamily. CMGC Ser/Thr protein kinase family. CDC2/CDKX subfamily.

It catalyses the reaction L-seryl-[protein] + ATP = O-phospho-L-seryl-[protein] + ADP + H(+). The catalysed reaction is L-threonyl-[protein] + ATP = O-phospho-L-threonyl-[protein] + ADP + H(+). This Dictyostelium discoideum (Social amoeba) protein is Probable cyclin-dependent serine/threonine-protein kinase DDB_G0278487.